The sequence spans 238 residues: Large ribosomal subunit protein uL1 (238 aa).

It belongs to the universal ribosomal protein uL1 family. Part of the 50S ribosomal subunit.

Binds directly to 23S rRNA. The L1 stalk is quite mobile in the ribosome, and is involved in E site tRNA release. In terms of biological role, protein L1 is also a translational repressor protein, it controls the translation of the L11 operon by binding to its mRNA. The sequence is that of Large ribosomal subunit protein uL1 from Trichodesmium erythraeum (strain IMS101).